Reading from the N-terminus, the 136-residue chain is Large ribosomal subunit protein uL16c (136 aa).

This sequence belongs to the universal ribosomal protein uL16 family. In terms of assembly, part of the 50S ribosomal subunit.

Its subcellular location is the plastid. It localises to the chloroplast. This Zea mays (Maize) protein is Large ribosomal subunit protein uL16c.